We begin with the raw amino-acid sequence, 476 residues long: MHDIKSIRDNPQAFDAAFTRRGLAPIADSLIKLDETRRIAIIASEQAQARRNAASKEIGEAKKAKDNARAEALMAEVTELKTTMPALDEAVKAADAALKKALSEIPNLPLAEVPQGADEHGNVVRSHFGAPRSYAFTPKPHYELGEALGQMDFEAAAKMSGARFVVLKKGLARLERAIGQFFLDVHTGEHGYTEVNPPLLVKDDAMFGTAQLPKFSNDQFRVDTEEIQIKSAYEEFEKAKNAILNYVEEAGIKSAREEKLEVLGFAYEPNPDRRWLIPTAEVSLTNLVRESILDEKELPMRLTALTPCFRAEAGAAGRDTRGMIRQHQFTKVELVSITTPEQSKDEHERMLACAEEVLRRLGLHYRVMTLCTGDMGFASQKTYDIEVWMPGQGEGGAYREISSCSVCGDFQARRMDARSRGPDGKPRFVHTLNGSGTAVGRALIAVIENYQQEDGSIAVPDALLPYMGGLKVIANS.

279 to 281 serves as a coordination point for L-serine; sequence TAE. Residue 310 to 312 participates in ATP binding; the sequence is RAE. Glutamate 333 contributes to the L-serine binding site. 400–403 provides a ligand contact to ATP; that stretch reads EISS. Residue serine 435 coordinates L-serine.

This sequence belongs to the class-II aminoacyl-tRNA synthetase family. Type-1 seryl-tRNA synthetase subfamily. Homodimer. The tRNA molecule binds across the dimer.

The protein resides in the cytoplasm. It catalyses the reaction tRNA(Ser) + L-serine + ATP = L-seryl-tRNA(Ser) + AMP + diphosphate + H(+). It carries out the reaction tRNA(Sec) + L-serine + ATP = L-seryl-tRNA(Sec) + AMP + diphosphate + H(+). It participates in aminoacyl-tRNA biosynthesis; selenocysteinyl-tRNA(Sec) biosynthesis; L-seryl-tRNA(Sec) from L-serine and tRNA(Sec): step 1/1. Its function is as follows. Catalyzes the attachment of serine to tRNA(Ser). Is also able to aminoacylate tRNA(Sec) with serine, to form the misacylated tRNA L-seryl-tRNA(Sec), which will be further converted into selenocysteinyl-tRNA(Sec). The polypeptide is Serine--tRNA ligase (Rhodopseudomonas palustris (strain BisA53)).